Reading from the N-terminus, the 272-residue chain is Putative phosphoenolpyruvate synthase regulatory protein (272 aa).

Residue 152–159 participates in ADP binding; that stretch reads GVSRSGKT.

The protein belongs to the pyruvate, phosphate/water dikinase regulatory protein family. PSRP subfamily.

It catalyses the reaction [pyruvate, water dikinase] + ADP = [pyruvate, water dikinase]-phosphate + AMP + H(+). It carries out the reaction [pyruvate, water dikinase]-phosphate + phosphate + H(+) = [pyruvate, water dikinase] + diphosphate. Its function is as follows. Bifunctional serine/threonine kinase and phosphorylase involved in the regulation of the phosphoenolpyruvate synthase (PEPS) by catalyzing its phosphorylation/dephosphorylation. This Hahella chejuensis (strain KCTC 2396) protein is Putative phosphoenolpyruvate synthase regulatory protein.